The chain runs to 181 residues: Diphosphoinositol polyphosphate phosphohydrolase NUDT4B (181 aa).

Residues Arg-10, 18-20, and 39-41 contribute to the substrate site; these read KKR and SSR. The Nudix hydrolase domain maps to 18 to 145; that stretch reads KKRAACLCFR…VHAEYLEKLK (128 aa). The Mg(2+) site is built by Gly-50 and Glu-66. Residues 51–72 carry the Nudix box motif; sequence GGMEPEEEPGGAAVREVYEEAG. Glu-69 (proton acceptor) is an active-site residue. Glu-70 serves as a coordination point for Mg(2+). Substrate is bound by residues 90–92, Arg-116, and Lys-134; that span reads RKH.

It belongs to the Nudix hydrolase family. DIPP subfamily. Mg(2+) is required as a cofactor. Mn(2+) serves as cofactor.

It is found in the cytoplasm. It catalyses the reaction diphospho-myo-inositol polyphosphate + H2O = myo-inositol polyphosphate + phosphate.. In terms of biological role, cleaves a beta-phosphate from the diphosphate groups in PP-InsP5 (diphosphoinositol pentakisphosphate), PP-InsP4 and [PP]2-InsP4 (bisdiphosphoinositol tetrakisphosphate), suggesting that it may play a role in signal transduction. Also able to catalyze the hydrolysis of dinucleoside oligophosphate Ap6A, but not Ap5A. The major reaction products are ADP and p4a from Ap6A. Also able to hydrolyze 5-phosphoribose 1-diphosphate. Does not play a role in U8 snoRNA decapping activity. Binds U8 snoRNA. This Homo sapiens (Human) protein is Diphosphoinositol polyphosphate phosphohydrolase NUDT4B.